The primary structure comprises 101 residues: Pore-forming peptide amoebapore C (101 aa).

The N-terminal stretch at M1–E24 is a signal peptide. The Saposin B-type domain occupies I25–C101. Cystine bridges form between C29–C101, C32–C95, and C59–C70.

Monomer. Homodimer. Hexamer; formed during insertion in the membrane.

Its subcellular location is the cytoplasmic granule. Its function is as follows. Forms pores in the cell membrane of host cells. Has antibacterial activity against M.luteus, no activity against E.coli. Implicated in the cytolytic activity of the parasite. This Entamoeba histolytica (strain ATCC 30459 / HM-1:IMSS / ABRM) protein is Pore-forming peptide amoebapore C.